The following is a 72-amino-acid chain: Toxin Acra II-2 (72 aa).

The LCN-type CS-alpha/beta domain occupies 3 to 67; the sequence is VPGNYPLNTN…VWNAAKNYCK (65 aa). Disulfide bonds link Cys18–Cys41, Cys27–Cys46, and Cys31–Cys48.

This sequence belongs to the long (3 C-C) scorpion toxin superfamily. Sodium channel inhibitor family. Beta subfamily. In terms of tissue distribution, expressed by the venom gland.

The protein localises to the secreted. Binds to sodium channels (Nav) and affects the channel activation process. In Androctonus crassicauda (Arabian fat-tailed scorpion), this protein is Toxin Acra II-2.